Reading from the N-terminus, the 1445-residue chain is DNA-directed RNA polymerase subunit beta'' (1445 aa).

Residues cysteine 220, cysteine 293, cysteine 300, and cysteine 303 each coordinate Zn(2+).

This sequence belongs to the RNA polymerase beta' chain family. RpoC2 subfamily. In plastids the minimal PEP RNA polymerase catalytic core is composed of four subunits: alpha, beta, beta', and beta''. When a (nuclear-encoded) sigma factor is associated with the core the holoenzyme is formed, which can initiate transcription. The cofactor is Zn(2+).

The protein localises to the plastid. The protein resides in the chloroplast. The enzyme catalyses RNA(n) + a ribonucleoside 5'-triphosphate = RNA(n+1) + diphosphate. In terms of biological role, DNA-dependent RNA polymerase catalyzes the transcription of DNA into RNA using the four ribonucleoside triphosphates as substrates. The protein is DNA-directed RNA polymerase subunit beta'' of Anthoceros angustus (Hornwort).